Here is an 86-residue protein sequence, read N- to C-terminus: Small ribosomal subunit protein bS16c (86 aa).

The protein belongs to the bacterial ribosomal protein bS16 family.

The protein resides in the plastid. It localises to the chloroplast. The polypeptide is Small ribosomal subunit protein bS16c (Liriodendron tulipifera (Tuliptree)).